A 102-amino-acid polypeptide reads, in one-letter code: NAD(P)H-quinone oxidoreductase subunit 4L (102 aa).

Transmembrane regions (helical) follow at residues 4 to 24 (LQFFLVVAAILFCIGIYGLIV), 33 to 53 (MSIELMLNAVNLNFMAFSNFV), and 65 to 85 (VFVITVAAAEAAVGLAIVLGI).

The protein belongs to the complex I subunit 4L family. NDH-1 can be composed of about 15 different subunits; different subcomplexes with different compositions have been identified which probably have different functions.

It is found in the cellular thylakoid membrane. It catalyses the reaction a plastoquinone + NADH + (n+1) H(+)(in) = a plastoquinol + NAD(+) + n H(+)(out). It carries out the reaction a plastoquinone + NADPH + (n+1) H(+)(in) = a plastoquinol + NADP(+) + n H(+)(out). NDH-1 shuttles electrons from an unknown electron donor, via FMN and iron-sulfur (Fe-S) centers, to quinones in the respiratory and/or the photosynthetic chain. The immediate electron acceptor for the enzyme in this species is believed to be plastoquinone. Couples the redox reaction to proton translocation, and thus conserves the redox energy in a proton gradient. Cyanobacterial NDH-1 also plays a role in inorganic carbon-concentration. This chain is NAD(P)H-quinone oxidoreductase subunit 4L, found in Synechococcus sp. (strain JA-3-3Ab) (Cyanobacteria bacterium Yellowstone A-Prime).